A 607-amino-acid polypeptide reads, in one-letter code: UvrABC system protein C (607 aa).

Residues 15–93 (RKPGVYRMLD…IKELKPPYNI (79 aa)) enclose the GIY-YIG domain. The region spanning 203–238 (REVADQLSTDMEAAAAALEFEKAALLRDQLAAIQAV) is the UVR domain. A compositionally biased stretch (basic residues) spans 542 to 551 (HRARRGKARK). The tract at residues 542–561 (HRARRGKARKQSTLDEIPGI) is disordered.

Belongs to the UvrC family. In terms of assembly, interacts with UvrB in an incision complex.

Its subcellular location is the cytoplasm. Functionally, the UvrABC repair system catalyzes the recognition and processing of DNA lesions. UvrC both incises the 5' and 3' sides of the lesion. The N-terminal half is responsible for the 3' incision and the C-terminal half is responsible for the 5' incision. In Alcanivorax borkumensis (strain ATCC 700651 / DSM 11573 / NCIMB 13689 / SK2), this protein is UvrABC system protein C.